The following is an 824-amino-acid chain: Sphingomyelin phosphodiesterase 4 (824 aa).

A helical membrane pass occupies residues 777-797 (LAFLFIFYILGSLLSLGPLIC).

Mg(2+) is required as a cofactor.

It localises to the endoplasmic reticulum membrane. The protein resides in the golgi apparatus membrane. It is found in the nucleus envelope. The protein localises to the cell membrane. Its subcellular location is the sarcolemma. It catalyses the reaction a sphingomyelin + H2O = phosphocholine + an N-acylsphing-4-enine + H(+). In terms of biological role, catalyzes the hydrolysis of membrane sphingomyelin to form phosphorylcholine and ceramide. It has a relevant role in the homeostasis of membrane sphingolipids, thereby influencing membrane integrity, and endoplasmic reticulum organization and function. May sensitize cells to DNA damage-induced apoptosis. The chain is Sphingomyelin phosphodiesterase 4 (smpd4) from Xenopus laevis (African clawed frog).